We begin with the raw amino-acid sequence, 629 residues long: tRNA uridine 5-carboxymethylaminomethyl modification enzyme MnmG (629 aa).

Residues 14 to 19 (GAGHAG), V126, and S181 each bind FAD. Residue 273–287 (GPRYCPSIEDKVVRF) participates in NAD(+) binding. Residue Q370 participates in FAD binding.

Belongs to the MnmG family. In terms of assembly, homodimer. Heterotetramer of two MnmE and two MnmG subunits. It depends on FAD as a cofactor.

It localises to the cytoplasm. Functionally, NAD-binding protein involved in the addition of a carboxymethylaminomethyl (cmnm) group at the wobble position (U34) of certain tRNAs, forming tRNA-cmnm(5)s(2)U34. This Geobacillus kaustophilus (strain HTA426) protein is tRNA uridine 5-carboxymethylaminomethyl modification enzyme MnmG.